The primary structure comprises 245 residues: Protein virB1 (245 aa).

The first 28 residues, 1 to 28 (MLKATGPLSIILLASTCPSSGAAPLSFA), serve as a signal peptide directing secretion. Positions 176 to 245 (LVPPLTARPK…LFDLNQGGPQ (70 aa)) are disordered. The segment covering 183–193 (RPKDDREKPGS) has biased composition (basic and acidic residues).

Belongs to the virb1 family.

In terms of biological role, virB proteins are suggested to act at the bacterial surface and there play an important role in directing T-DNA transfer to plant cells. The polypeptide is Protein virB1 (virB1) (Agrobacterium fabrum (strain C58 / ATCC 33970) (Agrobacterium tumefaciens (strain C58))).